We begin with the raw amino-acid sequence, 390 residues long: Neutrophil cytosol factor 1 (390 aa).

The 122-residue stretch at 4 to 125 (TFIRHIALLG…DFFKVRPDDL (122 aa)) folds into the PX domain. 2 SH3 domains span residues 156–215 (IILQ…PLDS) and 226–285 (YAGE…KAGE). The tract at residues 291-390 (QRQIRGRGAP…STKRKLTSAV (100 aa)) is disordered. 4 positions are modified to phosphoserine: Ser304, Ser321, Ser329, and Ser346. Over residues 374-383 (ILHRCTESTK) the composition is skewed to basic and acidic residues.

In terms of assembly, component of the phagocyte NADPH oxidase complex composed of an obligatory core heterodimer formed by the membrane proteins CYBA and CYBB and the cytosolic regulatory subunits NCF1/p47-phox, NCF2/p67-phox, NCF4/p40-phox and the small GTPase RAC1 or RAC2. Part of a cytosolic complex composed at least by NCF1, NCF2 and NCF4. Interacts (via C-terminus) with NCF2 (via the C-terminal SH3 domain). Interacts with NCF4. Interacts with CYBB. Interacts (via the second SH3 domain) with CYBA; interaction is phosphorylation-dependent. Interacts with NOXA1. Interacts with ADAM15. Interacts with TRAF4. Interacts with FASLG. Interacts with PARK7 (via C-terminus); the interaction is enhanced by LPS and modulates NCF1 phosphorylation and membrane translocation. In terms of processing, phosphorylated by PRKCD; phosphorylation induces activation of NCF1, leading to assembly and activation of the NADPH oxidase complex.

It is found in the cytoplasm. The protein localises to the cytosol. Its subcellular location is the membrane. Subunit of the phagocyte NADPH oxidase complex that mediates the transfer of electrons from cytosolic NADPH to O2 to produce the superoxide anion (O2(-)). In the activated complex, electrons are first transferred from NADPH to flavin adenine dinucleotide (FAD) and subsequently transferred via two heme molecules to molecular oxygen, producing superoxide through an outer-sphere reaction. Activation of the NADPH oxidase complex is initiated by the assembly of cytosolic subunits of the NADPH oxidase complex with the core NADPH oxidase complex to form a complex at the plasma membrane or phagosomal membrane. This activation process is initiated by phosphorylation dependent binding of the cytosolic NCF1/p47-phox subunit to the C-terminus of CYBA/p22-phox. The protein is Neutrophil cytosol factor 1 of Mus musculus (Mouse).